A 232-amino-acid polypeptide reads, in one-letter code: Ras association domain-containing protein 3 (232 aa).

N-acetylserine is present on serine 2. The disordered stretch occupies residues 25 to 46; that stretch reads RAPPGKSRSGQPDVEKEKETHN. Residues 37-46 show a composition bias toward basic and acidic residues; sequence DVEKEKETHN. The Ras-associating domain occupies 78-180; sequence YTGFIKVQME…TLSFVLREHE (103 aa). One can recognise an SARAH domain in the interval 181-228; sequence IGEWEAFSLPELQNFLRILDKEEDEQLQSLKRRYTAYRQKLEEALGEV.

The protein resides in the cytoplasm. Its subcellular location is the cytoskeleton. This chain is Ras association domain-containing protein 3 (Rassf3), found in Mus musculus (Mouse).